The following is an 873-amino-acid chain: E3 ubiquitin-protein ligase UPL5 (873 aa).

The span at 1–19 shows a compositional bias: polar residues; the sequence is MTLSRSSADDSTNNANRSY. Disordered stretches follow at residues 1–37 and 70–90; these read MTLS…DSSD and RSGE…SNRP. The Ubiquitin-like domain occupies 95-171; sequence LQIFVRMMSG…LQLVARMQST (77 aa). One can recognise a C-type lectin domain in the interval 272-296; sequence CLPIVLEFCKLLRKVCPDQKLYVTC. The region spanning 532 to 873 is the HECT domain; the sequence is SPEALHGGLF…DHVSSSFGKW (342 aa). The active-site Glycyl thioester intermediate is cysteine 839.

It belongs to the UPL family. As to quaternary structure, interacts with WRKY53.

It is found in the cytoplasm. The enzyme catalyses S-ubiquitinyl-[E2 ubiquitin-conjugating enzyme]-L-cysteine + [acceptor protein]-L-lysine = [E2 ubiquitin-conjugating enzyme]-L-cysteine + N(6)-ubiquitinyl-[acceptor protein]-L-lysine.. Its pathway is protein modification; protein ubiquitination. Functionally, E3 ubiquitin protein ligase that regulates leaf senescence through ubiquitination and subsequent degradation of WRKY53. In Arabidopsis thaliana (Mouse-ear cress), this protein is E3 ubiquitin-protein ligase UPL5 (UPL5).